Reading from the N-terminus, the 102-residue chain is NADH-quinone oxidoreductase subunit K (102 aa).

The next 3 helical transmembrane spans lie at Ile-5 to Leu-25, Ile-31 to Phe-51, and Phe-66 to Phe-86.

It belongs to the complex I subunit 4L family. In terms of assembly, NDH-1 is composed of 14 different subunits. Subunits NuoA, H, J, K, L, M, N constitute the membrane sector of the complex.

The protein resides in the cell inner membrane. It catalyses the reaction a quinone + NADH + 5 H(+)(in) = a quinol + NAD(+) + 4 H(+)(out). Its function is as follows. NDH-1 shuttles electrons from NADH, via FMN and iron-sulfur (Fe-S) centers, to quinones in the respiratory chain. The immediate electron acceptor for the enzyme in this species is believed to be ubiquinone. Couples the redox reaction to proton translocation (for every two electrons transferred, four hydrogen ions are translocated across the cytoplasmic membrane), and thus conserves the redox energy in a proton gradient. This chain is NADH-quinone oxidoreductase subunit K, found in Chelativorans sp. (strain BNC1).